A 381-amino-acid chain; its full sequence is Testis-specific expressed protein 55 (381 aa).

Disordered stretches follow at residues 1-176 (MDEP…SDPH) and 292-317 (TTEYTSDTTPVFDQGRSSQRSSQSSR). Composition is skewed to basic and acidic residues over residues 8 to 24 (SLNHENTTRAPDNEKNN) and 65 to 103 (RTSEEAEQRSSQPTEHRLPGHAERRASQQAERRLSERRT). The span at 104–113 (SQPPNQQLPS) shows a compositional bias: polar residues. Basic and acidic residues predominate over residues 114–125 (HSERKTSGKIDG). Acidic residues predominate over residues 134–143 (TDQETSEFDD). 2 stretches are compositionally biased toward polar residues: residues 147-163 (SASTDYLSARSQQQEYN) and 292-302 (TTEYTSDTTPV). Low complexity predominate over residues 307 to 317 (RSSQRSSQSSR).

In terms of tissue distribution, testis-specific.

The protein resides in the nucleus. The polypeptide is Testis-specific expressed protein 55 (Mus musculus (Mouse)).